The primary structure comprises 409 residues: uncharacterized protein (409 aa).

A run of 10 helical transmembrane segments spans residues 22–42, 58–78, 99–119, 174–194, 217–237, 266–286, 293–312, 316–338, 353–373, and 378–398; these read ILIIIGICHMLNDSLQAVIPA, LGIIAFTLNMVSSVMQPVVGW, GILGLAFAPSFITILCCVFFI, FGAVWFTLVAALAVMFLMYIA, NTAITKSVVSALIIIIFLIFA, SYIFVFLLFGAIGTFLGGPLA, FVILGSLLCSAPLAIVLPFA, LAYGVLALIGLVLMSSFSVTVVY, LTVGLAFGMGAIGAVALGALI, and LTPTMIAIAFLPVLGILAFLL.

The protein belongs to the major facilitator superfamily.

It is found in the cell membrane. This is an uncharacterized protein from Bacillus subtilis (strain 168).